A 547-amino-acid polypeptide reads, in one-letter code: Membrane protein insertase YidC (547 aa).

Residues 8-28 (LRLILAIALSFLFIALYSYFF) traverse the membrane as a helical segment. A compositionally biased stretch (low complexity) spans 37–50 (QTTKQETTNNHTAT). Residues 37–62 (QTTKQETTNNHTATSPNAPNAQHFST) form a disordered region. The span at 51-62 (SPNAPNAQHFST) shows a compositional bias: polar residues. The next 5 membrane-spanning stretches (helical) occupy residues 325-345 (VIEYGLITFFAKGVFVLLDYL), 348-368 (FVGNWGWAIILLTIIVRIILY), 414-434 (GANPLGGCLPLILQIPVFFAI), 449-469 (WILWIHDLSIMDPYFILPLLM), and 495-515 (LLPLLFTIFLITFPAGLVLYW).

It belongs to the OXA1/ALB3/YidC family. Type 1 subfamily. As to quaternary structure, interacts with the Sec translocase complex via SecD. Specifically interacts with transmembrane segments of nascent integral membrane proteins during membrane integration.

Its subcellular location is the cell inner membrane. Its function is as follows. Required for the insertion and/or proper folding and/or complex formation of integral membrane proteins into the membrane. Involved in integration of membrane proteins that insert both dependently and independently of the Sec translocase complex, as well as at least some lipoproteins. Aids folding of multispanning membrane proteins. The chain is Membrane protein insertase YidC from Helicobacter pylori (strain ATCC 700392 / 26695) (Campylobacter pylori).